Reading from the N-terminus, the 537-residue chain is Immunoglobulin-like domain-containing receptor 1 (537 aa).

Positions 1–22 (MGCGLLAAGLLLFTWLPAGCLS) are cleaved as a signal peptide. The 139-residue stretch at 23-161 (LLVTVQHTER…TSGDPDKEVK (139 aa)) folds into the Ig-like V-type domain. The Extracellular segment spans residues 23-166 (LLVTVQHTER…DKEVKLIVLH (144 aa)). A disulfide bridge connects residues Cys44 and Cys144. The chain crosses the membrane as a helical span at residues 167–187 (WLTVIFIILGALLLLLLIGVC). Topologically, residues 188–537 (WCQCCPQYCC…SSHSGRSVVI (350 aa)) are cytoplasmic. Residues 333-537 (PPLIRDPPSS…SSHSGRSVVI (205 aa)) form a disordered region. Over residues 341-357 (SSRTSNPSHQQRLNAVS) the composition is skewed to polar residues. Composition is skewed to basic and acidic residues over residues 359–380 (RHCD…RELQ) and 434–444 (RRPEPREGAQR). Basic residues predominate over residues 480-490 (QRRHHHRRRRS). Phosphoserine is present on residues Ser490 and Ser492. A compositionally biased stretch (basic and acidic residues) spans 518–530 (GNVERRLERESSH).

The protein belongs to the immunoglobulin superfamily. LISCH7 family. Homooligomer. Interacts with MARVELD2 and OCLN; the interaction is required to recruit MARVELD2 to tricellular contacts. Interacts (via C-terminus) with TRA2A, TRA2B and SRSF1. Interacts with PLSCR1. As to expression, expressed in the vestibule and in hair cells and supporting cells of the cochlea. Expressed in epithelial tissues. Highly expressed in colon but also detected in small intestine, bladder and lung. In colon, expressed in the upper portion of the crypts (at protein level). Expressed in CCK secretory cells of the proximal small intestine (at protein level). Expressed in the organ of Corti, stria vascularis, utricle and saccule of the inner ear.

Its subcellular location is the cell membrane. It is found in the cell junction. The protein resides in the tight junction. It localises to the nucleus. The protein localises to the cytoplasm. Maintains epithelial barrier function by recruiting MARVELD2/tricellulin to tricellular tight junctions (tTJs). Crucial for normal hearing by maintaining the structural and functional integrity of tTJs, which are critical for the survival of auditory neurosensory HCs. Mediates fatty acids and lipoproteins-stimulated CCK/cholecystokinin secretion in the small intestine. In the inner ear, may regulate alternative pre-mRNA splicing via binding to TRA2A, TRA2B and SRSF1. This Mus musculus (Mouse) protein is Immunoglobulin-like domain-containing receptor 1.